The sequence spans 382 residues: 2-heptyl-3-hydroxy-4(1H)-quinolone synthase (382 aa).

The protein belongs to the 3-hydroxybenzoate 6-hydroxylase family.

The enzyme catalyses 2-heptyl-4(1H)-quinolone + NADH + O2 + H(+) = 2-heptyl-3-hydroxy-4(1H)-quinolone + NAD(+) + H2O. In terms of biological role, involved in the terminal step of the biosynthesis of quinolone which in addition to serve as a potent signal for quorum sensing, chelates iron and promotes the formation of membrane vesicles (MVs). Catalyzes the hydroxylation of 2-heptyl-4-quinolone (C7-HHQ) to yield 2-heptyl-3-hydroxy-4-quinolone (PQS). PqsH is also able to hydroxylate HHQ analogs having alkyl side-chain lengths of 3 (C3-HHQ), 5 (C5-HHQ) and 9 (C9-HHQ) carbons, however catalytic efficiencies are significantly reduced for substrates with alkyl side-chain lengths below 7 carbons. The protein is 2-heptyl-3-hydroxy-4(1H)-quinolone synthase (pqsH) of Pseudomonas aeruginosa (strain UCBPP-PA14).